The primary structure comprises 274 residues: ATP synthase subunit delta (274 aa).

It belongs to the ATPase delta chain family. F-type ATPases have 2 components, F(1) - the catalytic core - and F(0) - the membrane proton channel. F(1) has five subunits: alpha(3), beta(3), gamma(1), delta(1), epsilon(1). F(0) has three main subunits: a(1), b(2) and c(10-14). The alpha and beta chains form an alternating ring which encloses part of the gamma chain. F(1) is attached to F(0) by a central stalk formed by the gamma and epsilon chains, while a peripheral stalk is formed by the delta and b chains.

Its subcellular location is the cell membrane. Its function is as follows. F(1)F(0) ATP synthase produces ATP from ADP in the presence of a proton or sodium gradient. F-type ATPases consist of two structural domains, F(1) containing the extramembraneous catalytic core and F(0) containing the membrane proton channel, linked together by a central stalk and a peripheral stalk. During catalysis, ATP synthesis in the catalytic domain of F(1) is coupled via a rotary mechanism of the central stalk subunits to proton translocation. Functionally, this protein is part of the stalk that links CF(0) to CF(1). It either transmits conformational changes from CF(0) to CF(1) or is implicated in proton conduction. The polypeptide is ATP synthase subunit delta (Corynebacterium efficiens (strain DSM 44549 / YS-314 / AJ 12310 / JCM 11189 / NBRC 100395)).